Consider the following 331-residue polypeptide: Putative peptidyl-prolyl cis-trans isomerase RC0542 (331 aa).

Residues 33–54 are disordered; that stretch reads EQTASNNSSTDENQTSINNEPP. Residues 128–226 form the PPIase FKBP-type domain; that stretch reads GHVVTVFYQI…SNEVKIYDDE (99 aa).

The catalysed reaction is [protein]-peptidylproline (omega=180) = [protein]-peptidylproline (omega=0). The polypeptide is Putative peptidyl-prolyl cis-trans isomerase RC0542 (Rickettsia conorii (strain ATCC VR-613 / Malish 7)).